Reading from the N-terminus, the 135-residue chain is ATP synthase epsilon chain (135 aa).

This sequence belongs to the ATPase epsilon chain family. F-type ATPases have 2 components, CF(1) - the catalytic core - and CF(0) - the membrane proton channel. CF(1) has five subunits: alpha(3), beta(3), gamma(1), delta(1), epsilon(1). CF(0) has three main subunits: a, b and c.

The protein resides in the cell inner membrane. Functionally, produces ATP from ADP in the presence of a proton gradient across the membrane. The protein is ATP synthase epsilon chain of Nitrobacter winogradskyi (strain ATCC 25391 / DSM 10237 / CIP 104748 / NCIMB 11846 / Nb-255).